The following is a 277-amino-acid chain: Ribosomal RNA small subunit methyltransferase A (277 aa).

Residues Asn27, Leu29, Gly54, Glu75, Asp95, and Asn118 each coordinate S-adenosyl-L-methionine.

It belongs to the class I-like SAM-binding methyltransferase superfamily. rRNA adenine N(6)-methyltransferase family. RsmA subfamily.

The protein localises to the cytoplasm. The catalysed reaction is adenosine(1518)/adenosine(1519) in 16S rRNA + 4 S-adenosyl-L-methionine = N(6)-dimethyladenosine(1518)/N(6)-dimethyladenosine(1519) in 16S rRNA + 4 S-adenosyl-L-homocysteine + 4 H(+). Functionally, specifically dimethylates two adjacent adenosines (A1518 and A1519) in the loop of a conserved hairpin near the 3'-end of 16S rRNA in the 30S particle. May play a critical role in biogenesis of 30S subunits. This Chlamydia muridarum (strain MoPn / Nigg) protein is Ribosomal RNA small subunit methyltransferase A.